Reading from the N-terminus, the 285-residue chain is Phosphatidylglycerol--prolipoprotein diacylglyceryl transferase (285 aa).

A run of 5 helical transmembrane segments spans residues 17-37 (ALGLSPIAFDLGVWHLFGLTL), 43-63 (WYALAYITGILLAWRYVLFLL), 78-98 (LVFWSTLGILVGGRLAYVLFY), 113-133 (WEGGMSYHGGMIGVFLAIWWV), and 139-159 (LSWLRIADYIGCAAPIGLFLG). An a 1,2-diacyl-sn-glycero-3-phospho-(1'-sn-glycerol)-binding site is contributed by Arg160. Helical transmembrane passes span 195–215 (LYEAGLEGILLFAFLNYQFFA), 223–243 (GKLAGFFLVGYGLSRFIVEWF), and 256–276 (GLTMGQTLTIPMVIAGLWLII).

This sequence belongs to the Lgt family.

The protein localises to the cell inner membrane. The catalysed reaction is L-cysteinyl-[prolipoprotein] + a 1,2-diacyl-sn-glycero-3-phospho-(1'-sn-glycerol) = an S-1,2-diacyl-sn-glyceryl-L-cysteinyl-[prolipoprotein] + sn-glycerol 1-phosphate + H(+). Its pathway is protein modification; lipoprotein biosynthesis (diacylglyceryl transfer). Catalyzes the transfer of the diacylglyceryl group from phosphatidylglycerol to the sulfhydryl group of the N-terminal cysteine of a prolipoprotein, the first step in the formation of mature lipoproteins. The polypeptide is Phosphatidylglycerol--prolipoprotein diacylglyceryl transferase (Zymomonas mobilis subsp. mobilis (strain ATCC 31821 / ZM4 / CP4)).